The primary structure comprises 396 residues: S-adenosylmethionine synthase (396 aa).

An ATP-binding site is contributed by histidine 16. Aspartate 18 lines the Mg(2+) pocket. Glutamate 44 lines the K(+) pocket. L-methionine is bound by residues glutamate 57 and glutamine 100. Positions 100–110 (QSPDIAQGVDD) are flexible loop. ATP contacts are provided by residues 174–176 (DAK), 241–242 (RF), aspartate 250, 256–257 (RK), alanine 273, and lysine 277. Aspartate 250 is an L-methionine binding site. Residue lysine 281 participates in L-methionine binding.

Belongs to the AdoMet synthase family. As to quaternary structure, homotetramer; dimer of dimers. Mg(2+) serves as cofactor. The cofactor is K(+).

It localises to the cytoplasm. It catalyses the reaction L-methionine + ATP + H2O = S-adenosyl-L-methionine + phosphate + diphosphate. It functions in the pathway amino-acid biosynthesis; S-adenosyl-L-methionine biosynthesis; S-adenosyl-L-methionine from L-methionine: step 1/1. Catalyzes the formation of S-adenosylmethionine (AdoMet) from methionine and ATP. The overall synthetic reaction is composed of two sequential steps, AdoMet formation and the subsequent tripolyphosphate hydrolysis which occurs prior to release of AdoMet from the enzyme. The sequence is that of S-adenosylmethionine synthase from Pediococcus pentosaceus (strain ATCC 25745 / CCUG 21536 / LMG 10740 / 183-1w).